The chain runs to 336 residues: GTPase Obg (336 aa).

The Obg domain occupies M1–L159. Positions A160–N333 constitute an OBG-type G domain. GTP contacts are provided by residues G166–S173, F191–V195, D213–G216, N283–D286, and S314–M316. Mg(2+) is bound by residues S173 and T193.

The protein belongs to the TRAFAC class OBG-HflX-like GTPase superfamily. OBG GTPase family. In terms of assembly, monomer. The cofactor is Mg(2+).

The protein localises to the cytoplasm. In terms of biological role, an essential GTPase which binds GTP, GDP and possibly (p)ppGpp with moderate affinity, with high nucleotide exchange rates and a fairly low GTP hydrolysis rate. Plays a role in control of the cell cycle, stress response, ribosome biogenesis and in those bacteria that undergo differentiation, in morphogenesis control. In Baumannia cicadellinicola subsp. Homalodisca coagulata, this protein is GTPase Obg.